The sequence spans 92 residues: Small ribosomal subunit protein uS19c (92 aa).

Belongs to the universal ribosomal protein uS19 family.

Its subcellular location is the plastid. It is found in the chloroplast. Protein S19 forms a complex with S13 that binds strongly to the 16S ribosomal RNA. This is Small ribosomal subunit protein uS19c from Chaetosphaeridium globosum (Charophycean green alga).